The chain runs to 884 residues: Nonsense-mediated mRNA decay factor EBS1 (884 aa).

2 disordered regions span residues asparagine 596–glycine 645 and glutamine 755–tyrosine 774. Polar residues predominate over residues arginine 633–glycine 645. Over residues serine 760–serine 772 the composition is skewed to low complexity.

Belongs to the EST1 family. Interacts with NMD helicase UPF1. Interacts with CDC33.

The protein localises to the nucleus. It localises to the chromosome. The protein resides in the telomere. Its subcellular location is the cytoplasm. It is found in the P-body. Its function is as follows. Plays a role in nonsense-mediated mRNA decay (NMD). Recruits UPF1 to cytoplasmic mRNA decay bodies (P-bodies). Negative regulator of gene expression. Inhibits translation most likely through effects on eIF-4E (CDC33). Involved in telomere maintenance. This Saccharomyces cerevisiae (strain ATCC 204508 / S288c) (Baker's yeast) protein is Nonsense-mediated mRNA decay factor EBS1.